We begin with the raw amino-acid sequence, 491 residues long: Leucine aminopeptidase 1 (491 aa).

2 residues coordinate Zn(2+): Lys252 and Asp257. Lys264 is an active-site residue. Zn(2+) is bound by residues Asp275, Asp334, and Glu336. Arg338 is an active-site residue.

It belongs to the peptidase M17 family. Zn(2+) is required as a cofactor. As to expression, expressed in the buccal cavity, pharynx, anterior gut and rectum.

It carries out the reaction Release of an N-terminal amino acid, Xaa-|-Yaa-, in which Xaa is preferably Leu, but may be other amino acids including Pro although not Arg or Lys, and Yaa may be Pro. Amino acid amides and methyl esters are also readily hydrolyzed, but rates on arylamides are exceedingly low.. Its function is as follows. Probably acts as a digestive enzyme. The chain is Leucine aminopeptidase 1 (lap-1) from Caenorhabditis elegans.